Reading from the N-terminus, the 263-residue chain is MGLMNAFDSQTEDSSPAIGRNLRSRPLARKKLSEMVEEELEQMIRRREFGEGEQLPSERELMAFFNVGRPSVREALAALKRKGLVQINNGERARVSRPSADTIIGEFSGMAKDFLSHPGGIAHFEQLRLFFESSLVRYAAEHATDEQIDLLAKALEINSQSLDNNAAFIRSDVDFHRVLAEIPGNPIFMAIHVALLDWLIAARPTVADQALHEHNNVSYQQHIAIVDAIRRHDPDEADRALQSHLNSVSATWHAFGQTTNKKK.

Residues 1-22 (MGLMNAFDSQTEDSSPAIGRNL) are disordered. The HTH gntR-type domain maps to 30-98 (KKLSEMVEEE…NGERARVSRP (69 aa)). The segment at residues 58–77 (ERELMAFFNVGRPSVREALA) is a DNA-binding region (H-T-H motif).

This sequence belongs to the NanR family.

Transcriptional repressor that controls expression of the genes required for the catabolism of sialic acids. This is HTH-type transcriptional repressor NanR from Shigella sonnei (strain Ss046).